Consider the following 66-residue polypeptide: Alpha-conotoxin GID (66 aa).

Positions 1-21 (MGMRMMFTVFLLVVLAATIVS) are cleaved as a signal peptide. Residues 22 to 44 (FTSDRASDGRNVAAKAFHRIGRT) constitute a propeptide that is removed on maturation. The tract at residues 45 to 48 (IRDE) is N-terminal tail important for activity on alpha-3-beta-2/CHRNA3-CHRNB2 and alpha-4-beta-2/CHRNA4-CHRNB2 nAChR. Residue Glu48 is modified to 4-carboxyglutamate. 2 disulfide bridges follow: Cys49–Cys55 and Cys50–Cys63. The tract at residues 51-53 (SNP) is ser-Xaa-Pro motif, crucial for potent interaction with nAChR. Pro60 carries the 4-hydroxyproline modification.

It belongs to the conotoxin A superfamily. Gamma-carboxyglutamation of Glu-48 seems to be not important for nAChR inhibition, since synthetic peptides without this modification do not show change in inhibition of alpha-7/CHRNA7 and alpha-3-beta-2/CHRNA3-CHRNB2 nAChR and show a 2.3-fold increase in inhibition of alpha-4-beta-2/CHRNA4-CHRNB2 nAChR. Post-translationally, hydroxylation of Pro-60 seems to be important for nAChR inhibition, since synthetic peptides without this modification show a small decrease in inhibition of alpha-7/CHRNA7 and alpha-3-beta-2/CHRNA3-CHRNB2 nAChR and a very important decrease in inhibition of alpha-4-beta-2/CHRNA4-CHRNB2 nAChR. In terms of processing, an amidation of Cys-63 increases potency against alpha-7/CHRNA7 (2.6-fold) and alpha-3-beta-2/CHRNA3-CHRNB2 (2-fold) nAChR. On the other hand, the peptide has no more activity on alpha-4-beta-2/CHRNA4-CHRNB2 nAChR with an amidated Cys-63. Expressed by the venom duct.

It localises to the secreted. In terms of biological role, alpha-conotoxins act on postsynaptic membranes, they bind to the nicotinic acetylcholine receptors (nAChR) and thus inhibit them. This toxin reversibly blocks alpha-3-beta-2/CHRNA3-CHRNB2 (IC(50)=3.1-5.1 nM), alpha-7/CHRNA7 (IC(50)=4.5-5.1 nM), and alpha-4-beta-2/CHRNA4-CHRNB2 (IC(50)=128.6-390 nM) nAChRs. The polypeptide is Alpha-conotoxin GID (Conus geographus (Geography cone)).